The chain runs to 141 residues: Large ribosomal subunit protein uL11 (141 aa).

This sequence belongs to the universal ribosomal protein uL11 family. In terms of assembly, part of the ribosomal stalk of the 50S ribosomal subunit. Interacts with L10 and the large rRNA to form the base of the stalk. L10 forms an elongated spine to which L12 dimers bind in a sequential fashion forming a multimeric L10(L12)X complex. One or more lysine residues are methylated.

Functionally, forms part of the ribosomal stalk which helps the ribosome interact with GTP-bound translation factors. The chain is Large ribosomal subunit protein uL11 from Helicobacter acinonychis (strain Sheeba).